A 76-amino-acid chain; its full sequence is ATP synthase subunit c (76 aa).

Helical transmembrane passes span 13–33 (LNVV…GILI) and 55–75 (FLGL…AFIF).

This sequence belongs to the ATPase C chain family. In terms of assembly, F-type ATPases have 2 components, F(1) - the catalytic core - and F(0) - the membrane proton channel. F(1) has five subunits: alpha(3), beta(3), gamma(1), delta(1), epsilon(1). F(0) has three main subunits: a(1), b(2) and c(10-14). The alpha and beta chains form an alternating ring which encloses part of the gamma chain. F(1) is attached to F(0) by a central stalk formed by the gamma and epsilon chains, while a peripheral stalk is formed by the delta and b chains.

The protein localises to the cell membrane. In terms of biological role, f(1)F(0) ATP synthase produces ATP from ADP in the presence of a proton or sodium gradient. F-type ATPases consist of two structural domains, F(1) containing the extramembraneous catalytic core and F(0) containing the membrane proton channel, linked together by a central stalk and a peripheral stalk. During catalysis, ATP synthesis in the catalytic domain of F(1) is coupled via a rotary mechanism of the central stalk subunits to proton translocation. Functionally, key component of the F(0) channel; it plays a direct role in translocation across the membrane. A homomeric c-ring of between 10-14 subunits forms the central stalk rotor element with the F(1) delta and epsilon subunits. The protein is ATP synthase subunit c of Bifidobacterium animalis subsp. lactis (strain AD011).